A 124-amino-acid polypeptide reads, in one-letter code: uncharacterized protein (124 aa).

It localises to the plastid. Its subcellular location is the chloroplast. This is an uncharacterized protein from Chlamydomonas reinhardtii (Chlamydomonas smithii).